Reading from the N-terminus, the 744-residue chain is TonB-dependent heme receptor A (744 aa).

The N-terminal stretch at Met-1–Ala-24 is a signal peptide. Residues Asp-45–Lys-157 enclose the TBDR plug domain. In terms of domain architecture, TBDR beta-barrel spans Lys-168–Phe-744.

The protein belongs to the TonB-dependent receptor family.

Its subcellular location is the cell outer membrane. Functionally, heme receptor. The sequence is that of TonB-dependent heme receptor A (tdhA) from Haemophilus influenzae (strain ATCC 51907 / DSM 11121 / KW20 / Rd).